A 433-amino-acid chain; its full sequence is Ribosome biogenesis protein WDR12 homolog (433 aa).

The tract at residues 21–102 (VEVFVVSYRH…ESVISIECIV (82 aa)) is ubiquitin-like (UBL) domain. WD repeat units follow at residues 114-151 (ALLD…LTSS), 153-194 (LHEE…SSTF), 203-242 (GHER…TSTV), 270-310 (GHKD…QINT), 312-351 (AAKK…GTLV), 357-397 (GHCG…TPLY), and 401-433 (GHSD…RRKM).

Belongs to the WD repeat WDR12/YTM1 family.

The protein resides in the nucleus. The protein localises to the nucleolus. It localises to the nucleoplasm. Required for maturation of ribosomal RNAs and formation of the large ribosomal subunit. The chain is Ribosome biogenesis protein WDR12 homolog from Brugia malayi (Filarial nematode worm).